The sequence spans 308 residues: Glycerol-3-phosphate dehydrogenase [NAD(P)+] (308 aa).

W13, R33, and K81 together coordinate NADPH. Positions 81 and 109 each coordinate sn-glycerol 3-phosphate. Residue A113 participates in NADPH binding. Residues K163, D216, S226, R227, and N228 each contribute to the sn-glycerol 3-phosphate site. K163 (proton acceptor) is an active-site residue. An NADPH-binding site is contributed by R227. Residue E253 coordinates NADPH.

This sequence belongs to the NAD-dependent glycerol-3-phosphate dehydrogenase family.

The protein localises to the cytoplasm. It carries out the reaction sn-glycerol 3-phosphate + NAD(+) = dihydroxyacetone phosphate + NADH + H(+). It catalyses the reaction sn-glycerol 3-phosphate + NADP(+) = dihydroxyacetone phosphate + NADPH + H(+). The protein operates within membrane lipid metabolism; glycerophospholipid metabolism. In terms of biological role, catalyzes the reduction of the glycolytic intermediate dihydroxyacetone phosphate (DHAP) to sn-glycerol 3-phosphate (G3P), the key precursor for phospholipid synthesis. This chain is Glycerol-3-phosphate dehydrogenase [NAD(P)+], found in Thermosynechococcus vestitus (strain NIES-2133 / IAM M-273 / BP-1).